A 119-amino-acid chain; its full sequence is Large ribosomal subunit protein bL20c (119 aa).

It belongs to the bacterial ribosomal protein bL20 family.

It localises to the plastid. Its subcellular location is the chloroplast. Functionally, binds directly to 23S ribosomal RNA and is necessary for the in vitro assembly process of the 50S ribosomal subunit. It is not involved in the protein synthesizing functions of that subunit. The polypeptide is Large ribosomal subunit protein bL20c (Saccharum hybrid (Sugarcane)).